Reading from the N-terminus, the 443-residue chain is Xaa-Pro dipeptidase (443 aa).

The Mn(2+) site is built by Asp246, Asp257, His339, Glu384, and Glu423.

It belongs to the peptidase M24B family. Bacterial-type prolidase subfamily. It depends on Mn(2+) as a cofactor.

It catalyses the reaction Xaa-L-Pro dipeptide + H2O = an L-alpha-amino acid + L-proline. In terms of biological role, splits dipeptides with a prolyl residue in the C-terminal position. The polypeptide is Xaa-Pro dipeptidase (Shigella dysenteriae serotype 1 (strain Sd197)).